Reading from the N-terminus, the 501-residue chain is Ribose import ATP-binding protein RbsA (501 aa).

2 consecutive ABC transporter domains span residues L5–K241 and A252–L495. G37 to S44 provides a ligand contact to ATP.

It belongs to the ABC transporter superfamily. Ribose importer (TC 3.A.1.2.1) family. In terms of assembly, the complex is composed of an ATP-binding protein (RbsA), two transmembrane proteins (RbsC) and a solute-binding protein (RbsB).

It localises to the cell inner membrane. The catalysed reaction is D-ribose(out) + ATP + H2O = D-ribose(in) + ADP + phosphate + H(+). Functionally, part of the ABC transporter complex RbsABC involved in ribose import. Responsible for energy coupling to the transport system. The protein is Ribose import ATP-binding protein RbsA of Escherichia coli O6:H1 (strain CFT073 / ATCC 700928 / UPEC).